A 337-amino-acid chain; its full sequence is Autophagy protein 5 (337 aa).

Residue Lys128 forms a Glycyl lysine isopeptide (Lys-Gly) (interchain with G-Cter in ATG12) linkage. The segment at 271-290 (RAQTSGEERSIDDTEEADGS) is disordered. Over residues 276–290 (GEERSIDDTEEADGS) the composition is skewed to basic and acidic residues.

The protein belongs to the ATG5 family. In terms of assembly, conjugated to ATG12. Conjugated to ATG12; which is essential for autophagy. Conjugation with ATG12 involves ATG7 as an E1-like activating enzyme and ATG10 as an E2-like conjugating enzyme. In terms of tissue distribution, ubiquitous.

It is found in the cytoplasm. Functionally, required for autophagy. Conjugation to ATG12 is essential for plant nutrient recycling. Involved in a negative feedback loop that modulates NPR1-dependent salicylic acid (SA) signaling and limits senescence and immunity-related programmed cell death (PCD) in plants. Involved in complete proteolysis of chloroplast stroma proteins in senescent leaves. Involved in the degradation of damaged peroxisomes. In Arabidopsis thaliana (Mouse-ear cress), this protein is Autophagy protein 5.